The primary structure comprises 111 residues: METVAHHRYAKSSSQKVRLVADLIRGCDASRAMEILNFSNKKAARLIKKILKSAISNAEHNEGENIENLKIKTIYVNPGPSIKRIMPRAKGRSDRILKRTSHITIVLSGKK.

The protein belongs to the universal ribosomal protein uL22 family. As to quaternary structure, part of the 50S ribosomal subunit.

This protein binds specifically to 23S rRNA; its binding is stimulated by other ribosomal proteins, e.g. L4, L17, and L20. It is important during the early stages of 50S assembly. It makes multiple contacts with different domains of the 23S rRNA in the assembled 50S subunit and ribosome. Functionally, the globular domain of the protein is located near the polypeptide exit tunnel on the outside of the subunit, while an extended beta-hairpin is found that lines the wall of the exit tunnel in the center of the 70S ribosome. This is Large ribosomal subunit protein uL22 from Wigglesworthia glossinidia brevipalpis.